Consider the following 410-residue polypeptide: Arginine deiminase (410 aa).

Catalysis depends on Cys-399, which acts as the Amidino-cysteine intermediate.

The protein belongs to the arginine deiminase family.

The protein resides in the cytoplasm. It catalyses the reaction L-arginine + H2O = L-citrulline + NH4(+). Its pathway is amino-acid degradation; L-arginine degradation via ADI pathway; carbamoyl phosphate from L-arginine: step 1/2. In Listeria monocytogenes serotype 4a (strain HCC23), this protein is Arginine deiminase.